The primary structure comprises 658 residues: Carnitine O-palmitoyltransferase 2, mitochondrial (658 aa).

Residues 1 to 25 constitute a mitochondrion transit peptide; it reads MVPRLLLRAWPRGPAVGPGAPSRPL. Residues 26 to 178 lie on the Mitochondrial matrix side of the membrane; the sequence is SAGSGPGQYL…GLLEPEVFHL (153 aa). N6-succinyllysine is present on lysine 69. An N6-acetyllysine modification is found at lysine 79. Lysine 85 carries the post-translational modification N6-succinyllysine. The note=Mitochondrial inner membrane intramembrane region spans 179-208; that stretch reads NPAKSDTITFKRLIRFVPSSLSWYGAYLVN. The Mitochondrial matrix segment spans residues 209–658; that stretch reads AYPLDMSQYF…DALEGKSIKS (450 aa). N6-acetyllysine; alternate is present on lysine 239. The residue at position 239 (lysine 239) is an N6-succinyllysine; alternate. N6-acetyllysine is present on lysine 305. Histidine 372 acts as the Proton acceptor in catalysis. N6-succinyllysine is present on residues lysine 424 and lysine 439. CoA is bound at residue 452–464; that stretch reads GKEFLKKQKLSPD. Residues tyrosine 486, serine 488, and threonine 499 each coordinate (R)-carnitine. 2 positions are modified to N6-acetyllysine; alternate: lysine 510 and lysine 544. Residues lysine 510 and lysine 544 each carry the N6-succinyllysine; alternate modification.

This sequence belongs to the carnitine/choline acetyltransferase family.

It localises to the mitochondrion inner membrane. It catalyses the reaction (R)-carnitine + hexadecanoyl-CoA = O-hexadecanoyl-(R)-carnitine + CoA. It carries out the reaction octanoyl-CoA + (R)-carnitine = O-octanoyl-(R)-carnitine + CoA. The enzyme catalyses decanoyl-CoA + (R)-carnitine = O-decanoyl-(R)-carnitine + CoA. The catalysed reaction is dodecanoyl-CoA + (R)-carnitine = O-dodecanoyl-R-carnitine + CoA. It catalyses the reaction tetradecanoyl-CoA + (R)-carnitine = O-tetradecanoyl-(R)-carnitine + CoA. It carries out the reaction (R)-carnitine + octadecanoyl-CoA = O-octadecanoyl-(R)-carnitine + CoA. The enzyme catalyses eicosanoyl-CoA + (R)-carnitine = O-eicosanoyl-(R)-carnitine + CoA. The catalysed reaction is (9Z)-tetradecenoyl-CoA + (R)-carnitine = O-(9Z)-tetradecenoyl-(R)-carnitine + CoA. It catalyses the reaction (5Z)-tetradecenoyl-CoA + (R)-carnitine = O-(5Z)-tetradecenoyl-(R)-carnitine + CoA. It carries out the reaction (R)-carnitine + (9Z)-octadecenoyl-CoA = O-(9Z)-octadecenoyl-(R)-carnitine + CoA. The enzyme catalyses 4,8-dimethylnonanoyl-CoA + (R)-carnitine = O-4,8-dimethylnonanoyl-(R)-carnitine + CoA. The protein operates within lipid metabolism; fatty acid beta-oxidation. With respect to regulation, inhibited by trans-2-hexadecanoyl-CoA. Functionally, involved in the intramitochondrial synthesis of acylcarnitines from accumulated acyl-CoA metabolites. Reconverts acylcarnitines back into the respective acyl-CoA esters that can then undergo beta-oxidation, an essential step for the mitochondrial uptake of long-chain fatty acids and their subsequent beta-oxidation in the mitochondrion. Active with medium (C8-C12) and long-chain (C14-C18) acyl-CoA esters. This is Carnitine O-palmitoyltransferase 2, mitochondrial from Homo sapiens (Human).